The primary structure comprises 520 residues: Bifunctional dihydrofolate reductase-thymidylate synthase (520 aa).

The region spanning 26–229 is the DHFR domain; sequence AFSIVVALDM…LEFEICKYVP (204 aa). Val30 is a binding site for substrate. NADP(+)-binding positions include Ala32 and 38–44; that span reads GIGDGES. Residue Asp52 coordinates substrate. Residues 81 to 83, 102 to 105, and 157 to 164 contribute to the NADP(+) site; these read RKT, LSSK, and GGAQVYAD. Substrate-binding residues include Tyr162 and Thr180. The thymidylate synthase stretch occupies residues 234-520; that stretch reads ERQYLELIDR…HPAIKMEMAV (287 aa). Position 254 (Arg254) interacts with dUMP. The active site involves Cys400. DUMP-binding positions include His401, 421–425, Asn433, and 463–465; these read QRSCD and HVY.

In the N-terminal section; belongs to the dihydrofolate reductase family. This sequence in the C-terminal section; belongs to the thymidylate synthase family.

It catalyses the reaction (6S)-5,6,7,8-tetrahydrofolate + NADP(+) = 7,8-dihydrofolate + NADPH + H(+). The enzyme catalyses dUMP + (6R)-5,10-methylene-5,6,7,8-tetrahydrofolate = 7,8-dihydrofolate + dTMP. The protein operates within cofactor biosynthesis; tetrahydrofolate biosynthesis; 5,6,7,8-tetrahydrofolate from 7,8-dihydrofolate: step 1/1. In terms of biological role, bifunctional enzyme. Involved in de novo dTMP biosynthesis. Key enzyme in folate metabolism. Catalyzes an essential reaction for de novo glycine and purine synthesis, DNA precursor synthesis, and for the conversion of dUMP to dTMP. This is Bifunctional dihydrofolate reductase-thymidylate synthase from Leishmania major.